Consider the following 284-residue polypeptide: TM2 domain-containing protein almondex (284 aa).

The first 32 residues, Met-1–Thr-32, serve as a signal peptide directing secretion. Positions Ala-33–Asp-63 are disordered. The Extracellular portion of the chain corresponds to Ala-33–Thr-225. Residues Ser-42 to Asn-51 show a composition bias toward basic and acidic residues. The span at Ser-52–Asp-63 shows a compositional bias: low complexity. Residues Asn-53, Asn-89, Asn-141, Asn-194, Asn-206, and Asn-216 are each glycosylated (N-linked (GlcNAc...) asparagine). The 48-residue stretch at Gly-220 to Val-267 folds into the TM2 domain. Residues Ala-226–Trp-246 traverse the membrane as a helical segment. The Cytoplasmic segment spans residues Gln-247 to Gly-249. Residues Ile-250–Ile-270 form a helical membrane-spanning segment. Over Ser-271–Ile-284 the chain is Extracellular.

Belongs to the TM2 family. In terms of tissue distribution, expressed in female ovary, mainly in nurse cells (at protein level). Expressed in the brain at low levels (at protein level).

It localises to the membrane. The protein localises to the vesicle. In terms of biological role, positive regulator of Notch signaling during lateral inhibition and boundary formation. Interacts with Notch signaling at the membrane, at the level of gamma-secretase-mediated S3 cleavage. May regulate Notch signaling by regulating the subcellular localization of N/Notch in a context dependent manner. Maternal neurogenic factor involved in Notch signaling-dependent mesectodermal and neuroectodermal specification during early embryogenesis. Functions cooperatively with bisc/TM2D1 and amrt/TM2D2. Required for maintenance of neuronal function. Involved in imaginal specification of eyes and wings. This is TM2 domain-containing protein almondex from Drosophila melanogaster (Fruit fly).